Here is a 512-residue protein sequence, read N- to C-terminus: Phosphotransferase UL97 homolog (512 aa).

Residue Asp274 is the Proton acceptor of the active site.

This sequence belongs to the protein kinase superfamily. Tyr protein kinase family.

The catalysed reaction is L-tyrosyl-[protein] + ATP = O-phospho-L-tyrosyl-[protein] + ADP + H(+). The protein is Phosphotransferase UL97 homolog of Elephantid herpesvirus 1 (isolate Asian elephant/Berlin/Kiba/1998) (EIHV-1).